The chain runs to 1102 residues: Coiled-coil domain-containing protein AGAP005037 (1102 aa).

Residues methionine 1–serine 11 show a composition bias toward basic and acidic residues. Disordered regions lie at residues methionine 1–glycine 69 and histidine 295–tyrosine 318. Positions serine 12–threonine 21 are enriched in low complexity. Over residues isoleucine 50–arginine 65 the composition is skewed to basic and acidic residues. Residues histidine 405–asparagine 430 are a coiled coil. 2 disordered regions span residues arginine 450–histidine 475 and aspartate 489–methionine 539. 2 coiled-coil regions span residues glutamate 554 to leucine 579 and aspartate 614 to asparagine 654. Disordered stretches follow at residues leucine 745–arginine 774, threonine 832–asparagine 958, and leucine 1031–proline 1087. Polar residues predominate over residues threonine 832–valine 849. Over residues proline 867–proline 881 the composition is skewed to pro residues. Low complexity predominate over residues threonine 904–valine 918. Polar residues predominate over residues aspartate 936–asparagine 958.

The sequence is that of Coiled-coil domain-containing protein AGAP005037 from Anopheles gambiae (African malaria mosquito).